A 576-amino-acid polypeptide reads, in one-letter code: Formate--tetrahydrofolate ligase 2 (576 aa).

Residue 69-76 participates in ATP binding; sequence TPLGEGKT.

This sequence belongs to the formate--tetrahydrofolate ligase family.

It carries out the reaction (6S)-5,6,7,8-tetrahydrofolate + formate + ATP = (6R)-10-formyltetrahydrofolate + ADP + phosphate. Its pathway is one-carbon metabolism; tetrahydrofolate interconversion. This Rubrobacter xylanophilus (strain DSM 9941 / JCM 11954 / NBRC 16129 / PRD-1) protein is Formate--tetrahydrofolate ligase 2.